A 337-amino-acid chain; its full sequence is Thymidylate synthase (337 aa).

DUMP is bound by residues R74 and 199 to 200 (RR). C219 acts as the Nucleophile in catalysis. DUMP is bound by residues 239-242 (RSGD), N250, and 280-282 (HIY). Residue D242 participates in (6R)-5,10-methylene-5,6,7,8-tetrahydrofolate binding. A336 contributes to the (6R)-5,10-methylene-5,6,7,8-tetrahydrofolate binding site.

Belongs to the thymidylate synthase family. As to quaternary structure, homodimer.

The catalysed reaction is dUMP + (6R)-5,10-methylene-5,6,7,8-tetrahydrofolate = 7,8-dihydrofolate + dTMP. It participates in pyrimidine metabolism; dTTP biosynthesis. The polypeptide is Thymidylate synthase (70) (Homo sapiens (Human)).